The chain runs to 622 residues: SLAIN motif-containing protein-like (622 aa).

Residues 34-60 (DLKEVQKLHELVKRLEIQNQQLKIKRN) are a coiled coil. 2 disordered regions span residues 404-441 (HRYS…IQNH) and 473-622 (VRSS…DGCY). Low complexity predominate over residues 405 to 415 (RYSPSPLSSPR). Polar residues-rich tracts occupy residues 416 to 430 (CQSP…TTSR), 484 to 502 (QGPS…STPP), 525 to 591 (VSTS…STVP), and 599 to 611 (SRRS…MNST).

The protein belongs to the SLAIN motif-containing family.

This chain is SLAIN motif-containing protein-like, found in Xenopus tropicalis (Western clawed frog).